A 414-amino-acid polypeptide reads, in one-letter code: Lipoyl synthase, mitochondrial (414 aa).

Residues 1–18 (MYRRSVGVLFVGRNTRWI) constitute a mitochondrion transit peptide. The segment covering 51 to 67 (GNSTEVENATSQLTGTS) has biased composition (polar residues). Residues 51–75 (GNSTEVENATSQLTGTSGKRRKGNR) form a disordered region. C150, C155, C161, C181, C185, C188, and S396 together coordinate [4Fe-4S] cluster. A Radical SAM core domain is found at 164–385 (GKDKSKATAT…KERALEMGFL (222 aa)).

It belongs to the radical SAM superfamily. Lipoyl synthase family. It depends on [4Fe-4S] cluster as a cofactor.

It is found in the mitochondrion. It catalyses the reaction [[Fe-S] cluster scaffold protein carrying a second [4Fe-4S](2+) cluster] + N(6)-octanoyl-L-lysyl-[protein] + 2 oxidized [2Fe-2S]-[ferredoxin] + 2 S-adenosyl-L-methionine + 4 H(+) = [[Fe-S] cluster scaffold protein] + N(6)-[(R)-dihydrolipoyl]-L-lysyl-[protein] + 4 Fe(3+) + 2 hydrogen sulfide + 2 5'-deoxyadenosine + 2 L-methionine + 2 reduced [2Fe-2S]-[ferredoxin]. Its pathway is protein modification; protein lipoylation via endogenous pathway; protein N(6)-(lipoyl)lysine from octanoyl-[acyl-carrier-protein]: step 2/2. Its function is as follows. Catalyzes the radical-mediated insertion of two sulfur atoms into the C-6 and C-8 positions of the octanoyl moiety bound to the lipoyl domains of lipoate-dependent enzymes, thereby converting the octanoylated domains into lipoylated derivatives. This Saccharomyces cerevisiae (strain RM11-1a) (Baker's yeast) protein is Lipoyl synthase, mitochondrial.